Consider the following 201-residue polypeptide: UPF0301 protein MAP_0045 (201 aa).

The protein belongs to the UPF0301 (AlgH) family.

The polypeptide is UPF0301 protein MAP_0045 (Mycolicibacterium paratuberculosis (strain ATCC BAA-968 / K-10) (Mycobacterium paratuberculosis)).